A 145-amino-acid polypeptide reads, in one-letter code: Aminoglycoside N(6')-acetyltransferase type 1 (145 aa).

The region spanning 1 to 145 (MNIKPASEAS…KVVYFSKKID (145 aa)) is the N-acetyltransferase domain. Substrate-binding residues include Trp22, Tyr65, and Glu78. 80–82 (IYV) provides a ligand contact to acetyl-CoA. Position 114 (Asp114) interacts with substrate. An acetyl-CoA-binding site is contributed by Asn119. Residue Glu135 coordinates substrate.

In terms of assembly, homodimer.

It catalyses the reaction kanamycin B + acetyl-CoA = N(6')-acetylkanamycin B + CoA + H(+). Catalyzes the transfer of an acetyl group from acetyl-CoA to the 6'-amino group of aminoglycoside molecules conferring resistance to antibiotics containing the purpurosamine ring including amikacin, kanamycin, tobramycin and netilmicin. The sequence is that of Aminoglycoside N(6')-acetyltransferase type 1 from Acinetobacter haemolyticus.